A 351-amino-acid chain; its full sequence is Methionine import ATP-binding protein MetN (351 aa).

Residues 2 to 238 form the ABC transporter domain; that stretch reads IKLNHINKTY…PKHPITRELI (237 aa). 35–42 provides a ligand contact to ATP; that stretch reads GYSGAGKS.

Belongs to the ABC transporter superfamily. Methionine importer (TC 3.A.1.24) family. As to quaternary structure, the complex is composed of two ATP-binding proteins (MetN), two transmembrane proteins (MetI) and a solute-binding protein (MetQ).

The protein resides in the cell inner membrane. The enzyme catalyses L-methionine(out) + ATP + H2O = L-methionine(in) + ADP + phosphate + H(+). It carries out the reaction D-methionine(out) + ATP + H2O = D-methionine(in) + ADP + phosphate + H(+). In terms of biological role, part of the ABC transporter complex MetNIQ involved in methionine import. Responsible for energy coupling to the transport system. The sequence is that of Methionine import ATP-binding protein MetN from Helicobacter hepaticus (strain ATCC 51449 / 3B1).